The sequence spans 363 residues: Actin-related protein 7 (363 aa).

Methionine 1 is modified (N-acetylmethionine).

It belongs to the actin family. Plant ARP7 subfamily. As to expression, mostly expressed in flowers, and, to a lower extent, in roots, seedlings, leaves and siliques (at protein level).

It is found in the nucleus. The protein localises to the cytoplasm. In terms of biological role, essential protein required during embryogenesis and all plant development stages, probably through a chromatin-mediated regulation of gene expression. The sequence is that of Actin-related protein 7 (ARP7) from Arabidopsis thaliana (Mouse-ear cress).